A 448-amino-acid polypeptide reads, in one-letter code: Na(+)-malate symporter (448 aa).

The next 11 membrane-spanning stretches (helical) occupy residues 31–51 (IGVIPLPLYTVLAVIIILAAY), 60–80 (LGGFAIIMILGVFLGDIGQRI), 86–106 (IGGPAILSLFVPSFLVFYNVL), 123–143 (FLYFYIACLVVGSILGMNRIV), 153–173 (VPLVAGTIAAVAAGILVGFIF), 182–202 (FFVVVPIIAGGIGEGILPLSI), 214–234 (VFVSQLVPAAIIGNVFAIICA), 276–293 (LMGAGVLLACTFFIFGGL), 297–319 (FIFIPGAILMIISAAAVKYANIL), 333–353 (FISSSFTWPLMVGLGILFIPL), and 359–379 (VISIPFVIICISVVIAMIGSG).

The protein belongs to the 2-hydroxycarboxylate transporter (2-HCT) (TC 2.A.24) family.

It is found in the cell membrane. Its function is as follows. Acts as a Na(+)-malate symporter, as it catalyzes malate-dependent uptake of Na(+) and Na(+)-dependent uptake of malate. This chain is Na(+)-malate symporter, found in Bacillus subtilis (strain 168).